We begin with the raw amino-acid sequence, 222 residues long: Ribosomal RNA small subunit methyltransferase I (222 aa).

It belongs to the methyltransferase superfamily. RsmI family.

It localises to the cytoplasm. The enzyme catalyses cytidine(1402) in 16S rRNA + S-adenosyl-L-methionine = 2'-O-methylcytidine(1402) in 16S rRNA + S-adenosyl-L-homocysteine + H(+). Catalyzes the 2'-O-methylation of the ribose of cytidine 1402 (C1402) in 16S rRNA. This Mycoplasmopsis pulmonis (strain UAB CTIP) (Mycoplasma pulmonis) protein is Ribosomal RNA small subunit methyltransferase I.